The following is a 211-amino-acid chain: MKCIDRRLIGDLIALSTVEGLSVTDAAEKLCLTRQGLYKLLRHLKKEGYVAEGPAIRLTQKGKDTLGIVLKDLLRYFNILSIRLSGRVVSGLGEGAFYMSLEGYRRAIEQKLGFTPYPGTLNIKLDPPSVVYKRYLDSLPGILIPGFSNGLRTYGAVKAFRAKLRDIEGAIVMPERTHHPTDVIEVIAPFKLREILGLRDGDRVEIEIYLE.

The tract at residues 1 to 81 (MKCIDRRLIG…DLLRYFNILS (81 aa)) is H-T-H motif-like. The segment at 82–211 (IRLSGRVVSG…DRVEIEIYLE (130 aa)) is riboflavin kinase. 91 to 96 (GLGEGA) serves as a coordination point for CDP. Mg(2+) is bound by residues T120 and N122. T177 and E185 together coordinate FMN. 190–193 (FKLR) provides a ligand contact to CDP.

This sequence belongs to the archaeal riboflavin kinase family. Requires Mg(2+) as cofactor.

It carries out the reaction riboflavin + CTP = CDP + FMN + H(+). It functions in the pathway cofactor biosynthesis; FMN biosynthesis; FMN from riboflavin (CTP route): step 1/1. Its function is as follows. Catalyzes the CTP-dependent phosphorylation of riboflavin (vitamin B2) to form flavin mononucleotide (FMN). In Pyrobaculum islandicum (strain DSM 4184 / JCM 9189 / GEO3), this protein is Riboflavin kinase (ribK).